A 445-amino-acid polypeptide reads, in one-letter code: Ribosomal protein uS12 methylthiotransferase RimO (445 aa).

The region spanning 4–119 (IKVALVSLGC…LLESIKVFLK (116 aa)) is the MTTase N-terminal domain. [4Fe-4S] cluster is bound by residues C13, C48, C82, C156, C160, and C163. The Radical SAM core domain occupies 142-372 (TTPTYTAYVR…MILQQSISKD (231 aa)). A TRAM domain is found at 375 to 441 (KEKIGKIYEV…EYDLIGVVYN (67 aa)).

The protein belongs to the methylthiotransferase family. RimO subfamily. [4Fe-4S] cluster serves as cofactor.

It is found in the cytoplasm. It catalyses the reaction L-aspartate(89)-[ribosomal protein uS12]-hydrogen + (sulfur carrier)-SH + AH2 + 2 S-adenosyl-L-methionine = 3-methylsulfanyl-L-aspartate(89)-[ribosomal protein uS12]-hydrogen + (sulfur carrier)-H + 5'-deoxyadenosine + L-methionine + A + S-adenosyl-L-homocysteine + 2 H(+). Functionally, catalyzes the methylthiolation of an aspartic acid residue of ribosomal protein uS12. This is Ribosomal protein uS12 methylthiotransferase RimO from Clostridium botulinum (strain Loch Maree / Type A3).